A 298-amino-acid chain; its full sequence is Elongation factor Ts (298 aa).

Residues 80 to 83 (TDFV) form an involved in Mg(2+) ion dislocation from EF-Tu region.

Belongs to the EF-Ts family.

The protein localises to the cytoplasm. Functionally, associates with the EF-Tu.GDP complex and induces the exchange of GDP to GTP. It remains bound to the aminoacyl-tRNA.EF-Tu.GTP complex up to the GTP hydrolysis stage on the ribosome. The protein is Elongation factor Ts of Acidovorax sp. (strain JS42).